The chain runs to 238 residues: Ribonuclease PH (238 aa).

Phosphate contacts are provided by residues Arg86 and 124–126 (GTR).

This sequence belongs to the RNase PH family. In terms of assembly, homohexameric ring arranged as a trimer of dimers.

The catalysed reaction is tRNA(n+1) + phosphate = tRNA(n) + a ribonucleoside 5'-diphosphate. Functionally, phosphorolytic 3'-5' exoribonuclease that plays an important role in tRNA 3'-end maturation. Removes nucleotide residues following the 3'-CCA terminus of tRNAs; can also add nucleotides to the ends of RNA molecules by using nucleoside diphosphates as substrates, but this may not be physiologically important. Probably plays a role in initiation of 16S rRNA degradation (leading to ribosome degradation) during starvation. The protein is Ribonuclease PH of Yersinia pseudotuberculosis serotype O:1b (strain IP 31758).